A 172-amino-acid polypeptide reads, in one-letter code: Putative RNA polymerase II transcriptional coactivator (172 aa).

2 disordered regions span residues 1-43 (MPPK…QDGN) and 123-172 (QTDA…DDDE). Positions 24-43 (GNTGKAQPQELTKGSDQDGN) are enriched in polar residues. A compositionally biased stretch (basic and acidic residues) spans 131 to 144 (PKVKALESNKESIK). Positions 158 to 172 (TSDEEEAAEDEDDDE) are enriched in acidic residues.

It belongs to the transcriptional coactivator PC4 family.

It is found in the nucleus. In terms of biological role, general coactivator that functions cooperatively with TAFs and mediates functional interactions between upstream activators and the general transcriptional machinery. Binds single-stranded DNA. This chain is Putative RNA polymerase II transcriptional coactivator, found in Neurospora crassa (strain ATCC 24698 / 74-OR23-1A / CBS 708.71 / DSM 1257 / FGSC 987).